We begin with the raw amino-acid sequence, 255 residues long: Large ribosomal subunit protein uL4 (255 aa).

This sequence belongs to the universal ribosomal protein uL4 family. Part of the 50S ribosomal subunit.

Functionally, one of the primary rRNA binding proteins, this protein initially binds near the 5'-end of the 23S rRNA. It is important during the early stages of 50S assembly. It makes multiple contacts with different domains of the 23S rRNA in the assembled 50S subunit and ribosome. Forms part of the polypeptide exit tunnel. The chain is Large ribosomal subunit protein uL4 from Pyrococcus horikoshii (strain ATCC 700860 / DSM 12428 / JCM 9974 / NBRC 100139 / OT-3).